We begin with the raw amino-acid sequence, 394 residues long: MISYLASIFLLATVSAVPSGRVEVVFPSVETSRSGVKTVKFTALDQDVELKLRSAGEILGKRFAIQDVDVESLRRKIYRDSVNGAALLIDEDGPLTIEGIVNSKLRIQPFESGRITKDGIIAHQIVEVIDDKKSYDRVAVIPENVKRNAENVSRMARDDDCIVVEYYIVTDSAFTKRFKSNSALTNYVTVMFTGVQNLMDTLELGIGVRLLGVTTFTEKTEPSFIKDNLIPGPPAAFDPDVLISAMSKYYCNHQTGLAKDTDLIFLITARGMGDPREDGTVDINTAGIANSAGVCKPCFKSGIATDDSDYNERVDTLAHESVHLLGSPHDGEGPNLVSLEGSPGAANCPAKAGYIMGNRNDKNKYKFSPCTKKCVEYLLSKPTASCIFQQCTDF.

The N-terminal stretch at 1–16 (MISYLASIFLLATVSA) is a signal peptide. A propeptide spanning residues 17-157 (VPSGRVEVVF…NAENVSRMAR (141 aa)) is cleaved from the precursor. Positions 162–391 (IVVEYYIVTD…PTASCIFQQC (230 aa)) constitute a Peptidase M12B domain. The cysteines at positions 295 and 386 are disulfide-linked. A Zn(2+)-binding site is contributed by H319. The active site involves E320. Positions 323 and 329 each coordinate Zn(2+).

Zn(2+) serves as cofactor. In terms of processing, contains 4 disulfide bonds. As to expression, expressed by the venom gland.

Its subcellular location is the secreted. Inhibited by EDTA. Acts as a metalloprotease. Penetrates intact tissue and specifically cleaves the vesicle-associated membrane protein 2 (VAMP2) (part of the SNARE complex) involved in pancreatic secretion, thus disrupting the normal vesicular traffic. In Tityus serrulatus (Brazilian scorpion), this protein is Venom metalloproteinase antarease TserMP_A.